The following is a 180-amino-acid chain: NADH-quinone oxidoreductase subunit I (180 aa).

2 consecutive 4Fe-4S ferredoxin-type domains span residues 48 to 80 (IVLT…LQKA) and 90 to 119 (EFFR…LTPD). [4Fe-4S] cluster-binding residues include cysteine 60, cysteine 63, cysteine 66, cysteine 70, cysteine 99, cysteine 102, cysteine 105, and cysteine 109.

The protein belongs to the complex I 23 kDa subunit family. As to quaternary structure, NDH-1 is composed of 13 different subunits. Subunits NuoA, H, J, K, L, M, N constitute the membrane sector of the complex. [4Fe-4S] cluster is required as a cofactor.

It is found in the cell inner membrane. It carries out the reaction a quinone + NADH + 5 H(+)(in) = a quinol + NAD(+) + 4 H(+)(out). NDH-1 shuttles electrons from NADH, via FMN and iron-sulfur (Fe-S) centers, to quinones in the respiratory chain. The immediate electron acceptor for the enzyme in this species is believed to be ubiquinone. Couples the redox reaction to proton translocation (for every two electrons transferred, four hydrogen ions are translocated across the cytoplasmic membrane), and thus conserves the redox energy in a proton gradient. This is NADH-quinone oxidoreductase subunit I from Erwinia tasmaniensis (strain DSM 17950 / CFBP 7177 / CIP 109463 / NCPPB 4357 / Et1/99).